Here is a 62-residue protein sequence, read N- to C-terminus: MAKKCAISGKGPMSGNNVSHAKNRTKRRFLLNLRTVRIALDDGTTRKIKISARELRTLKKNS.

The segment at 1 to 22 is disordered; that stretch reads MAKKCAISGKGPMSGNNVSHAK.

Belongs to the bacterial ribosomal protein bL28 family.

This chain is Large ribosomal subunit protein bL28, found in Sulfurimonas denitrificans (strain ATCC 33889 / DSM 1251) (Thiomicrospira denitrificans (strain ATCC 33889 / DSM 1251)).